We begin with the raw amino-acid sequence, 340 residues long: Tryptophan--tRNA ligase (340 aa).

Residues 11–13 (RPT) and 19–20 (GH) each bind ATP. Positions 12 to 20 (PTGKLHLGH) match the 'HIGH' region motif. Residue Asp-140 participates in L-tryptophan binding. ATP contacts are provided by residues 152–154 (GND), Leu-194, and 202–206 (KMSKS). Residues 202–206 (KMSKS) carry the 'KMSKS' region motif.

The protein belongs to the class-I aminoacyl-tRNA synthetase family. In terms of assembly, homodimer.

The protein localises to the cytoplasm. The enzyme catalyses tRNA(Trp) + L-tryptophan + ATP = L-tryptophyl-tRNA(Trp) + AMP + diphosphate + H(+). Functionally, catalyzes the attachment of tryptophan to tRNA(Trp). This is Tryptophan--tRNA ligase from Streptococcus mutans serotype c (strain ATCC 700610 / UA159).